We begin with the raw amino-acid sequence, 486 residues long: Ribosomal RNA small subunit methyltransferase F (486 aa).

S-adenosyl-L-methionine-binding positions include 124–130, E148, D175, and D193; that span reads ASAPGSK. Catalysis depends on C246, which acts as the Nucleophile.

Belongs to the class I-like SAM-binding methyltransferase superfamily. RsmB/NOP family.

It localises to the cytoplasm. It carries out the reaction cytidine(1407) in 16S rRNA + S-adenosyl-L-methionine = 5-methylcytidine(1407) in 16S rRNA + S-adenosyl-L-homocysteine + H(+). In terms of biological role, specifically methylates the cytosine at position 1407 (m5C1407) of 16S rRNA. This is Ribosomal RNA small subunit methyltransferase F from Shewanella putrefaciens (strain CN-32 / ATCC BAA-453).